The sequence spans 459 residues: Glycerol-3-phosphate acyltransferase, chloroplastic (459 aa).

The transit peptide at 1 to 90 directs the protein to the chloroplast; sequence MTLTFSSSAA…FNEAAGETPS (90 aa). The HXXXXD motif signature appears at 229 to 234; sequence HQSEAD.

Belongs to the GPAT/DAPAT family.

It is found in the plastid. The protein resides in the chloroplast stroma. The enzyme catalyses sn-glycerol 3-phosphate + an acyl-CoA = a 1-acyl-sn-glycero-3-phosphate + CoA. It functions in the pathway phospholipid metabolism; CDP-diacylglycerol biosynthesis; CDP-diacylglycerol from sn-glycerol 3-phosphate: step 1/3. Functionally, esterifies acyl-group from acyl-ACP to the sn-1 position of glycerol-3-phosphate. The enzyme from chilling-resistant plants discriminates against non-fluid palmitic acid and selects oleic acid whereas the enzyme from sensitive plants accepts both fatty acids. This is an oleate-selective acyltransferase. The chain is Glycerol-3-phosphate acyltransferase, chloroplastic (ATS1) from Arabidopsis thaliana (Mouse-ear cress).